The following is an 88-amino-acid chain: Small ribosomal subunit protein uS15c (88 aa).

Belongs to the universal ribosomal protein uS15 family. In terms of assembly, part of the 30S ribosomal subunit.

It localises to the plastid. Its subcellular location is the chloroplast. This is Small ribosomal subunit protein uS15c (rps15) from Crucihimalaya wallichii (Rock-cress).